The sequence spans 103 residues: Large ribosomal subunit protein bL21 (103 aa).

This sequence belongs to the bacterial ribosomal protein bL21 family. Part of the 50S ribosomal subunit. Contacts protein L20.

In terms of biological role, this protein binds to 23S rRNA in the presence of protein L20. In Pseudomonas paraeruginosa (strain DSM 24068 / PA7) (Pseudomonas aeruginosa (strain PA7)), this protein is Large ribosomal subunit protein bL21.